Consider the following 394-residue polypeptide: Putative pectate lyase 17 (394 aa).

The signal sequence occupies residues 1–22 (MTHFTVSCLLVALFLCQSLVHA). 3 residues coordinate Ca(2+): Asp192, Asp216, and Asp220. Residue Arg272 is part of the active site.

Belongs to the polysaccharide lyase 1 family. It depends on Ca(2+) as a cofactor.

It catalyses the reaction Eliminative cleavage of (1-&gt;4)-alpha-D-galacturonan to give oligosaccharides with 4-deoxy-alpha-D-galact-4-enuronosyl groups at their non-reducing ends.. It functions in the pathway glycan metabolism; pectin degradation; 2-dehydro-3-deoxy-D-gluconate from pectin: step 2/5. The protein is Putative pectate lyase 17 of Arabidopsis thaliana (Mouse-ear cress).